Here is a 403-residue protein sequence, read N- to C-terminus: Nuclear receptor subfamily 2 group F member 5 (403 aa).

The segment at 16–44 (PGSQLQMCSQEPGGTPGTPSGSTPGNDAL) is disordered. A DNA-binding region (nuclear receptor) is located at residues 51 to 126 (NVDCMVCGDK…VGMRREAVQR (76 aa)). NR C4-type zinc fingers lie at residues 54–74 (CMVCGDKSSGKHYGQFTCEGC) and 90–114 (CRGNRDCPIDQHHRNQCQYCRLKKC). The NR LBD domain maps to 152-378 (YLSGFISLLL…TLLRDMLLSG (227 aa)).

It belongs to the nuclear hormone receptor family. NR2 subfamily.

The protein resides in the nucleus. Its function is as follows. Putative receptor that is required in photoreceptor cells precursors during eye development. This chain is Nuclear receptor subfamily 2 group F member 5 (nr2f5), found in Danio rerio (Zebrafish).